The primary structure comprises 260 residues: uncharacterized protein (260 aa).

This is an uncharacterized protein from Aquifex aeolicus (strain VF5).